The sequence spans 331 residues: Ornithine carbamoyltransferase (331 aa).

Carbamoyl phosphate-binding positions include 55 to 58 (STRT), Q82, R106, and 133 to 136 (HPTQ). L-ornithine is bound by residues N166, D230, and 234 to 235 (SM). Carbamoyl phosphate contacts are provided by residues 272 to 273 (CL) and R317.

The protein belongs to the aspartate/ornithine carbamoyltransferase superfamily. OTCase family.

It is found in the cytoplasm. The enzyme catalyses carbamoyl phosphate + L-ornithine = L-citrulline + phosphate + H(+). It participates in amino-acid biosynthesis; L-arginine biosynthesis; L-arginine from L-ornithine and carbamoyl phosphate: step 1/3. Reversibly catalyzes the transfer of the carbamoyl group from carbamoyl phosphate (CP) to the N(epsilon) atom of ornithine (ORN) to produce L-citrulline. This chain is Ornithine carbamoyltransferase, found in Neisseria meningitidis serogroup C / serotype 2a (strain ATCC 700532 / DSM 15464 / FAM18).